A 195-amino-acid polypeptide reads, in one-letter code: Packaging protein 2 (195 aa).

Positions 1–124 are disordered; the sequence is MAPKKKLQLP…QEQQQRQGYR (124 aa). Acidic residues predominate over residues 15-53; the sequence is TDEEEYWDSQAEEVLDEEEEMMEDWDSLDEASEAEEVSD. The span at 54 to 63 shows a compositional bias: low complexity; that stretch reads ETPSPSVAFP.

This sequence belongs to the adenoviridae splicing factor family. In terms of assembly, part of a genome packaging complex composed of packaging proteins 1, 2 and 3; this complex specifically binds to the packaging sequence on the left end of viral genomic DNA and performs packaging of the viral genome. Self-assembles into higher-order structures.

The protein resides in the host nucleus. Its function is as follows. Component of the packaging machinery which encapsidates the viral DNA into preformed capsids and transcriptional activator of the viral major late promoter (MLP). Binds, along with packaging proteins 1 and 3, to the specific packaging sequence on the left end of viral genomic DNA and plays an active role in packaging of the viral genome into preformed capsids. Specifically binds to the 5'-TTTG-3' nucleotides of the repeats making up the packaging sequence. Forms a transcription factor called DEF-A through cooperative binding with packaging protein 1. DEF-A binds to downstream elements of the major late promoter (MLP) and stimulates transcription from the MLP after initiation of viral DNA replication. Simultaneously suppresses early gene expression and is thus likely to participate in the early-late switch in the expression pattern of the late viral proteins. May as well enhance transcription from IVa2 and pIX promoters. This is Packaging protein 2 from Homo sapiens (Human).